The following is a 500-amino-acid chain: Lysine--tRNA ligase (500 aa).

Mg(2+) contacts are provided by Glu410 and Glu417.

It belongs to the class-II aminoacyl-tRNA synthetase family. Homodimer. Requires Mg(2+) as cofactor.

The protein localises to the cytoplasm. It carries out the reaction tRNA(Lys) + L-lysine + ATP = L-lysyl-tRNA(Lys) + AMP + diphosphate. The protein is Lysine--tRNA ligase of Pseudomonas putida (strain ATCC 47054 / DSM 6125 / CFBP 8728 / NCIMB 11950 / KT2440).